Reading from the N-terminus, the 393-residue chain is NAD(P)H-quinone oxidoreductase subunit H, chloroplastic (393 aa).

It belongs to the complex I 49 kDa subunit family. NDH is composed of at least 16 different subunits, 5 of which are encoded in the nucleus.

It is found in the plastid. The protein resides in the chloroplast thylakoid membrane. The enzyme catalyses a plastoquinone + NADH + (n+1) H(+)(in) = a plastoquinol + NAD(+) + n H(+)(out). It carries out the reaction a plastoquinone + NADPH + (n+1) H(+)(in) = a plastoquinol + NADP(+) + n H(+)(out). NDH shuttles electrons from NAD(P)H:plastoquinone, via FMN and iron-sulfur (Fe-S) centers, to quinones in the photosynthetic chain and possibly in a chloroplast respiratory chain. The immediate electron acceptor for the enzyme in this species is believed to be plastoquinone. Couples the redox reaction to proton translocation, and thus conserves the redox energy in a proton gradient. The protein is NAD(P)H-quinone oxidoreductase subunit H, chloroplastic of Morus indica (Mulberry).